The following is a 187-amino-acid chain: UPF0301 protein VS_2679 (187 aa).

It belongs to the UPF0301 (AlgH) family.

This Vibrio atlanticus (strain LGP32) (Vibrio splendidus (strain Mel32)) protein is UPF0301 protein VS_2679.